Consider the following 228-residue polypeptide: ATP synthase F(0) complex subunit a (228 aa).

5 helical membrane-spanning segments follow: residues 13–33 (NILA…IFPM), 69–89 (WALI…LGLL), 98–118 (QLSM…LIGL), 139–159 (IPTL…ALGV), and 194–214 (ILLF…ALVF).

It belongs to the ATPase A chain family. In terms of assembly, component of the ATP synthase complex composed at least of ATP5F1A/subunit alpha, ATP5F1B/subunit beta, ATP5MC1/subunit c (homooctomer), MT-ATP6/subunit a, MT-ATP8/subunit 8, ATP5ME/subunit e, ATP5MF/subunit f, ATP5MG/subunit g, ATP5MK/subunit k, ATP5MJ/subunit j, ATP5F1C/subunit gamma, ATP5F1D/subunit delta, ATP5F1E/subunit epsilon, ATP5PF/subunit F6, ATP5PB/subunit b, ATP5PD/subunit d, ATP5PO/subunit OSCP. ATP synthase complex consists of a soluble F(1) head domain (subunits alpha(3) and beta(3)) - the catalytic core - and a membrane F(0) domain - the membrane proton channel (subunits c, a, 8, e, f, g, k and j). These two domains are linked by a central stalk (subunits gamma, delta, and epsilon) rotating inside the F1 region and a stationary peripheral stalk (subunits F6, b, d, and OSCP). Interacts with DNAJC30; interaction is direct.

It is found in the mitochondrion inner membrane. It carries out the reaction H(+)(in) = H(+)(out). In terms of biological role, subunit a, of the mitochondrial membrane ATP synthase complex (F(1)F(0) ATP synthase or Complex V) that produces ATP from ADP in the presence of a proton gradient across the membrane which is generated by electron transport complexes of the respiratory chain. ATP synthase complex consist of a soluble F(1) head domain - the catalytic core - and a membrane F(1) domain - the membrane proton channel. These two domains are linked by a central stalk rotating inside the F(1) region and a stationary peripheral stalk. During catalysis, ATP synthesis in the catalytic domain of F(1) is coupled via a rotary mechanism of the central stalk subunits to proton translocation. With the subunit c (ATP5MC1), forms the proton-conducting channel in the F(0) domain, that contains two crucial half-channels (inlet and outlet) that facilitate proton movement from the mitochondrial intermembrane space (IMS) into the matrix. Protons are taken up via the inlet half-channel and released through the outlet half-channel, following a Grotthuss mechanism. The sequence is that of ATP synthase F(0) complex subunit a from Pelomedusa subrufa (African side-necked turtle).